Here is a 714-residue protein sequence, read N- to C-terminus: Probable serine/threonine-protein kinase At1g09600 (714 aa).

The interval 1–64 (MGCNCTKGTR…NVGFEERSND (64 aa)) is disordered. A lipid anchor (N-myristoyl glycine) is attached at Gly-2. Over residues 16–27 (VDNSNSIVSNVN) the composition is skewed to low complexity. Positions 31 to 46 (RRSKPKKTPKKKKKSK) are enriched in basic residues. Positions 163-447 (FEKLEKIGQG…TASALESEFF (285 aa)) constitute a Protein kinase domain. ATP contacts are provided by residues 169 to 177 (IGQGTYSSV) and Lys-192. Asp-287 acts as the Proton acceptor in catalysis. The segment covering 471 to 498 (KAQEEEAKRKKDTSSKQNDSKQVSRESK) has biased composition (basic and acidic residues). Disordered regions lie at residues 471 to 579 (KAQE…RKEL) and 693 to 714 (VDKK…ANGR). Polar residues-rich tracts occupy residues 506–528 (NAES…NSDK) and 556–573 (GVSS…GSSR).

This sequence belongs to the protein kinase superfamily. Ser/Thr protein kinase family.

The polypeptide is Probable serine/threonine-protein kinase At1g09600 (Arabidopsis thaliana (Mouse-ear cress)).